We begin with the raw amino-acid sequence, 312 residues long: Serine/threonine-protein phosphatase PP1 isozyme 5 (312 aa).

The residue at position 2 (A2) is an N-acetylalanine. Mn(2+) is bound by residues D70, H72, D98, and N130. H131 functions as the Proton donor in the catalytic mechanism. Residues H179 and H254 each contribute to the Mn(2+) site.

It belongs to the PPP phosphatase family. PP-1 subfamily. Mn(2+) serves as cofactor.

The protein localises to the nucleus. It is found in the cytoplasm. The enzyme catalyses O-phospho-L-seryl-[protein] + H2O = L-seryl-[protein] + phosphate. It catalyses the reaction O-phospho-L-threonyl-[protein] + H2O = L-threonyl-[protein] + phosphate. Its activity is regulated as follows. Phosphatase activity is strongly reduced by the protein phosphatase inhibitor 2 (I-2). Functionally, serine/threonine-protein phosphatase that possesses phosphatase activity toward para-nitrophenyl phosphate (pNPP) in vitro. This chain is Serine/threonine-protein phosphatase PP1 isozyme 5, found in Arabidopsis thaliana (Mouse-ear cress).